Consider the following 359-residue polypeptide: tRNA-specific 2-thiouridylase MnmA (359 aa).

Residues A6–S13 and L32 each bind ATP. C101 acts as the Nucleophile in catalysis. C101 and C193 are disulfide-bonded. ATP is bound at residue G125. The interaction with tRNA stretch occupies residues K143–Q145. C193 serves as the catalytic Cysteine persulfide intermediate.

Belongs to the MnmA/TRMU family.

The protein localises to the cytoplasm. The enzyme catalyses S-sulfanyl-L-cysteinyl-[protein] + uridine(34) in tRNA + AH2 + ATP = 2-thiouridine(34) in tRNA + L-cysteinyl-[protein] + A + AMP + diphosphate + H(+). In terms of biological role, catalyzes the 2-thiolation of uridine at the wobble position (U34) of tRNA, leading to the formation of s(2)U34. The sequence is that of tRNA-specific 2-thiouridylase MnmA from Mycobacterium sp. (strain JLS).